A 139-amino-acid polypeptide reads, in one-letter code: ATP synthase epsilon chain (139 aa).

The protein belongs to the ATPase epsilon chain family. In terms of assembly, F-type ATPases have 2 components, CF(1) - the catalytic core - and CF(0) - the membrane proton channel. CF(1) has five subunits: alpha(3), beta(3), gamma(1), delta(1), epsilon(1). CF(0) has three main subunits: a, b and c.

The protein localises to the cell inner membrane. In terms of biological role, produces ATP from ADP in the presence of a proton gradient across the membrane. In Pseudomonas putida (strain ATCC 47054 / DSM 6125 / CFBP 8728 / NCIMB 11950 / KT2440), this protein is ATP synthase epsilon chain.